Reading from the N-terminus, the 93-residue chain is Large ribosomal subunit protein eL42 (93 aa).

Residues Cys11, Cys14, Cys72, and Cys75 each coordinate Zn(2+). The C4-type zinc finger occupies 11–75 (CPHCHSHFEH…TDLKYRCSEC (65 aa)).

The protein belongs to the eukaryotic ribosomal protein eL42 family. Part of the 50S ribosomal subunit. Zn(2+) serves as cofactor.

Binds to the 23S rRNA. The sequence is that of Large ribosomal subunit protein eL42 (rpl44e) from Natronomonas pharaonis (strain ATCC 35678 / DSM 2160 / CIP 103997 / JCM 8858 / NBRC 14720 / NCIMB 2260 / Gabara) (Halobacterium pharaonis).